Here is a 748-residue protein sequence, read N- to C-terminus: MTTEAKCPFNHAVVGTGTTNRDWWPKQLRVDLLSQHSSKSNPLDPSFNYADAFKHLDLQALKQDLHALMTDSQDWWPADFGHYGPLFVRMAWHSAGTYRIGDGRGGGGRGQQRFAPLNSWPDNVSLDKARRLLWPIKQKYGQAISWADLMILTGNVALESMGLKTFGFAGGREDTWEPDQDLYWGRETKWLGGDERYSRGSPGVDEAHGVLVKDDDSQVPHTRDLENPLAAVQMGLIYVNPEGPDGNPDPIASARDIRDTFARMAMNDEETVALIAGGHTFGKTHGAGPADYVGAEPEAGELESQGFGWHNRYGSGKGADTITSGLEVTWTTTPAQWSNDYFDHLFGFEWELSKSPAGAHQWVAKNADAIIPDAHDASRKHRPTMLTTDLALRFDPAYEAISRRFQQHPEQFADAFARAWFKLTHRDMGPRARYLGADVPAEELVWQDPVPAVDHALVDAQDAAALKQTILASGLSVAHLVSTAWASASTFRGSDKRGGANGARIRLAPQKEWQANQPEQLAKVLATLERIQADFNAAQSGGKKISLADLVVLAGNAAVEHAAQAAGHQVTVPFAPGRTDASQEQTDVESFAVLEPVADGFRNFAKRRYAVPAEALLIDKAQLLTLTAPELTVLVGGLRVLGANVGDSKHGVFTSRPGVLSNDFFANLLDMRTEWKATSEAKEVFEGRDRSTGELRWTGTRVDLVFGSNSILRAVAEVYASADAQEKFVHDFVAAWTKVMQLDRFDLA.

A cross-link (tryptophyl-tyrosyl-methioninium (Trp-Tyr) (with M-264)) is located at residues 92 to 238 (WHSAGTYRIG…LAAVQMGLIY (147 aa)). H93 (proton acceptor) is an active-site residue. The segment at residues 238–264 (YVNPEGPDGNPDPIASARDIRDTFARM) is a cross-link (tryptophyl-tyrosyl-methioninium (Tyr-Met) (with W-92)). H279 contacts heme b.

The protein belongs to the peroxidase family. Peroxidase/catalase subfamily. Homodimer or homotetramer. Heme b serves as cofactor. In terms of processing, formation of the three residue Trp-Tyr-Met cross-link is important for the catalase, but not the peroxidase activity of the enzyme.

It catalyses the reaction H2O2 + AH2 = A + 2 H2O. It carries out the reaction 2 H2O2 = O2 + 2 H2O. Functionally, bifunctional enzyme with both catalase and broad-spectrum peroxidase activity. The polypeptide is Catalase-peroxidase (Xanthomonas axonopodis pv. citri (strain 306)).